The following is a 469-amino-acid chain: Ufm1-specific protease 2 (469 aa).

The residue at position 1 (Met-1) is an N-acetylmethionine. Active-site residues include Cys-302, Asp-426, and His-428.

This sequence belongs to the peptidase C78 family.

Its subcellular location is the endoplasmic reticulum. It is found in the cytoplasm. The protein localises to the nucleus. Functionally, thiol-dependent isopeptidase that specifically cleaves UFM1, a ubiquitin-like modifier protein, from conjugated proteins, such as CD274/PD-L1, CYB5R3, DDRGK1, MRE11, RPL26/uL24, TRIP4 and RPL26/uL24. While it is also able to mediate the processing of UFM1 precursors, a prerequisite for conjugation reactions, UFSP2 mainly acts as a protein deUFMylase that mediates deconjugation of UFM1 from target proteins. Mediates deUFMylation of RPL26/uL24, a critical step to release the UFM1 ribosome E3 ligase (UREL) complex during the recycling of 60S ribosome subunits from the endoplasmic reticulum. Catalyzes deUFMylation of TRIP4, regulating intracellular nuclear receptors transactivation and thereby regulate cell proliferation and differentiation. This is Ufm1-specific protease 2 from Pongo abelii (Sumatran orangutan).